Here is a 329-residue protein sequence, read N- to C-terminus: Lipoyl synthase (329 aa).

Positions 1-23 (MTDLTATPAPAEPAASAYDPTAK) are disordered. [4Fe-4S] cluster-binding residues include cysteine 76, cysteine 81, cysteine 87, cysteine 102, cysteine 106, cysteine 109, and serine 316. The Radical SAM core domain maps to 87–305 (CFGKGTATFM…EEEAYKMGFT (219 aa)).

Belongs to the radical SAM superfamily. Lipoyl synthase family. [4Fe-4S] cluster serves as cofactor.

The protein resides in the cytoplasm. The catalysed reaction is [[Fe-S] cluster scaffold protein carrying a second [4Fe-4S](2+) cluster] + N(6)-octanoyl-L-lysyl-[protein] + 2 oxidized [2Fe-2S]-[ferredoxin] + 2 S-adenosyl-L-methionine + 4 H(+) = [[Fe-S] cluster scaffold protein] + N(6)-[(R)-dihydrolipoyl]-L-lysyl-[protein] + 4 Fe(3+) + 2 hydrogen sulfide + 2 5'-deoxyadenosine + 2 L-methionine + 2 reduced [2Fe-2S]-[ferredoxin]. The protein operates within protein modification; protein lipoylation via endogenous pathway; protein N(6)-(lipoyl)lysine from octanoyl-[acyl-carrier-protein]: step 2/2. Catalyzes the radical-mediated insertion of two sulfur atoms into the C-6 and C-8 positions of the octanoyl moiety bound to the lipoyl domains of lipoate-dependent enzymes, thereby converting the octanoylated domains into lipoylated derivatives. The polypeptide is Lipoyl synthase (Burkholderia mallei (strain NCTC 10247)).